The following is a 642-amino-acid chain: MPVITLPDGSKREFAHAVSTLDVAADIGPGLAKACIAGRVNGELKDACDLIETDAELSIITAKDEEGVEILRHSCAHLLGHAIKQMWPETKMAIGPVIDNGFYYDIDLEHKLTQDDIEALEKRMLQLAKTNYDVVKRVVSWQEARDTFAARGEEYKIAILDENISKDATPALYHHEEYTDMCRGPHVPNMRFCQHFKLMSIAGAYWRGNSENKMLQRIYGTAWADKKALSTHLTRLEEAAKRDHRKIGKQLDLYHMQEEAPGMVFWHNDGWSIFLELERFIRRKLNQYTYQEVKGPLMMDRVLWERSGHWDKYSEAMFTTSSENREYAIKPMNCPGHVQIFNQGLKSYRDLPLRMAEFGCCHRNEPSGSLHGLMRVRGFTQDDAHIFCTDDQVQEEVSACIQMVYDTYSTFGFENIVVKLSTRPEKRIGDDAMWDRAEEALKQALRANNIEFTLLPGEGAFYGPKIEFTLHDCLDRAWQCGTVQLDYALPNRLGATYVAEDNSRQTPVMIHRAILGSLERFLGILIEEYAGRFPTWLAPMQVVVMNITDKQADYVQEIVKFFKEQGIRASFDLRNEKIGFKIREHTLRRVPYLLVVGDQEMENKEVAVRTRDGIDLGKMRLEDFATKIHQQISLRSLKLLEE.

The 61-residue stretch at 1–61 (MPVITLPDGS…ETDAELSIIT (61 aa)) folds into the TGS domain. Residues 243 to 534 (DHRKIGKQLD…LIEEYAGRFP (292 aa)) are catalytic. Positions 334, 385, and 511 each coordinate Zn(2+).

Belongs to the class-II aminoacyl-tRNA synthetase family. As to quaternary structure, homodimer. It depends on Zn(2+) as a cofactor.

The protein resides in the cytoplasm. It catalyses the reaction tRNA(Thr) + L-threonine + ATP = L-threonyl-tRNA(Thr) + AMP + diphosphate + H(+). Catalyzes the attachment of threonine to tRNA(Thr) in a two-step reaction: L-threonine is first activated by ATP to form Thr-AMP and then transferred to the acceptor end of tRNA(Thr). Also edits incorrectly charged L-seryl-tRNA(Thr). In Shewanella sp. (strain W3-18-1), this protein is Threonine--tRNA ligase.